A 262-amino-acid chain; its full sequence is Tryptophan synthase alpha chain (262 aa).

Catalysis depends on proton acceptor residues E48 and D59.

Belongs to the TrpA family. In terms of assembly, tetramer of two alpha and two beta chains.

It catalyses the reaction (1S,2R)-1-C-(indol-3-yl)glycerol 3-phosphate + L-serine = D-glyceraldehyde 3-phosphate + L-tryptophan + H2O. It participates in amino-acid biosynthesis; L-tryptophan biosynthesis; L-tryptophan from chorismate: step 5/5. In terms of biological role, the alpha subunit is responsible for the aldol cleavage of indoleglycerol phosphate to indole and glyceraldehyde 3-phosphate. The chain is Tryptophan synthase alpha chain from Helicobacter pylori (strain ATCC 700392 / 26695) (Campylobacter pylori).